The sequence spans 430 residues: MATTPIFNASCSFPSTRGIDCKSYIGLRSNVSKVSVASSRIATSQRRNLVVRASESGNGHAKKLGMSDAECEAAVAAGNVPEAPPVPPKPAAPVGTPIIKPLNLSRRPRRNRASPVTRAAFQETDISPANFVYPLFIHEGEEDTPIGAMPGCYRLGWRHGLVQEVAKARAVGVNSIVLFPKVPEALKNSTGDEAYNDNGLVPRTIRLLKDKYPDLIIYTDVALDPYSSDGHDGIVREDGVIMNDETVHQLCKQAVSQARAGADVVSPSDMMDGRVGAIRSALDAEGFQNVSIMSYTAKYASSFYGPFREALDSNPRFGDKKTYQMNPANYREALIEAREDEAEGADILLVKPGLPYLDIIRLLRDKSPLPIAAYQVSGEYSMIKAGGVLKMIDEEKVMMESLMCLRRAGADIILTYFALQAATCLCGEKR.

The transit peptide at 1–52 (MATTPIFNASCSFPSTRGIDCKSYIGLRSNVSKVSVASSRIATSQRRNLVVR) directs the protein to the chloroplast. Positions 82-91 (EAPPVPPKPA) are enriched in pro residues. Residues 82 to 101 (EAPPVPPKPAAPVGTPIIKP) are disordered. The active-site Schiff-base intermediate with substrate is the lysine 298. Residues arginine 308 and lysine 320 each contribute to the 5-aminolevulinate site. Glutamate 336 is a binding site for Mg(2+). Catalysis depends on lysine 351, which acts as the Schiff-base intermediate with substrate. 5-aminolevulinate is bound by residues serine 377 and tyrosine 416.

Belongs to the ALAD family. Homooctamer. Mg(2+) serves as cofactor. In terms of tissue distribution, highly expressed in cotyledons during dark-to-light transition.

The protein resides in the plastid. It is found in the chloroplast. The enzyme catalyses 2 5-aminolevulinate = porphobilinogen + 2 H2O + H(+). The protein operates within porphyrin-containing compound metabolism; protoporphyrin-IX biosynthesis; coproporphyrinogen-III from 5-aminolevulinate: step 1/4. Its pathway is porphyrin-containing compound metabolism; chlorophyll biosynthesis. Its function is as follows. Catalyzes an early step in the biosynthesis of tetrapyrroles. Binds two molecules of 5-aminolevulinate per subunit, each at a distinct site, and catalyzes their condensation to form porphobilinogen. This chain is Delta-aminolevulinic acid dehydratase 1, chloroplastic (HEMB1), found in Arabidopsis thaliana (Mouse-ear cress).